A 190-amino-acid polypeptide reads, in one-letter code: MDVENDRPPRRGAAGERNSGTMIYPALPATEVLVVAECWRAEAGAEAIIHRAVETAAGMVDTDTGDAELAIMLTDDAGIRTLNANWRGIDKPTNVLSFPALQPTGAPSPDDAPRMLGDIAIAYETLRREACDEHKPFDHHLSHLTIHGFLHLIGYDHETDEEAGEMENLERKILARLGIPDPYAPQERMA.

Positions 1–20 (MDVENDRPPRRGAAGERNSG) are disordered. Residues His147, His151, and His157 each contribute to the Zn(2+) site.

The protein belongs to the endoribonuclease YbeY family. Zn(2+) is required as a cofactor.

The protein resides in the cytoplasm. Single strand-specific metallo-endoribonuclease involved in late-stage 70S ribosome quality control and in maturation of the 3' terminus of the 16S rRNA. This Nitrobacter hamburgensis (strain DSM 10229 / NCIMB 13809 / X14) protein is Endoribonuclease YbeY.